Consider the following 142-residue polypeptide: Large ribosomal subunit protein uL11 (142 aa).

The protein belongs to the universal ribosomal protein uL11 family. In terms of assembly, part of the ribosomal stalk of the 50S ribosomal subunit. Interacts with L10 and the large rRNA to form the base of the stalk. L10 forms an elongated spine to which L12 dimers bind in a sequential fashion forming a multimeric L10(L12)X complex. One or more lysine residues are methylated.

Its function is as follows. Forms part of the ribosomal stalk which helps the ribosome interact with GTP-bound translation factors. This Bartonella tribocorum (strain CIP 105476 / IBS 506) protein is Large ribosomal subunit protein uL11.